The sequence spans 78 residues: Small ribosomal subunit protein bS18 (78 aa).

Belongs to the bacterial ribosomal protein bS18 family. Part of the 30S ribosomal subunit. Forms a tight heterodimer with protein bS6.

Its function is as follows. Binds as a heterodimer with protein bS6 to the central domain of the 16S rRNA, where it helps stabilize the platform of the 30S subunit. This chain is Small ribosomal subunit protein bS18, found in Lactobacillus delbrueckii subsp. bulgaricus (strain ATCC BAA-365 / Lb-18).